The sequence spans 185 residues: Intraflagellar transport protein 22 homolog (185 aa).

GTP is bound by residues 10–17, 63–67, and 123–126; these read GPCESGKT, DCGGD, and HKPG. Ser137 is modified (phosphoserine).

It belongs to the small GTPase superfamily. Rab family. As to quaternary structure, component of the IFT complex B, at least composed of IFT20, IFT22, IFT25, IFT27, IFT46, IFT52, TRAF3IP1/IFT54, IFT57, IFT74, IFT80, IFT81, and IFT88. Interacts with IFT88. Interacts with CFAP61.

It localises to the cell projection. The protein localises to the cilium. Functionally, small GTPase-like component of the intraflagellar transport (IFT) complex B. This is Intraflagellar transport protein 22 homolog (Ift22) from Mus musculus (Mouse).